The chain runs to 426 residues: uncharacterized protein (426 aa).

The first 23 residues, 1–23 (MKKFILFLIILLFSIYFLNVSSA), serve as a signal peptide directing secretion.

This is an uncharacterized protein from Methanocaldococcus jannaschii (strain ATCC 43067 / DSM 2661 / JAL-1 / JCM 10045 / NBRC 100440) (Methanococcus jannaschii).